Reading from the N-terminus, the 219-residue chain is Large ribosomal subunit protein uL3 (219 aa).

The segment at 113 to 142 is disordered; it reads TTKGHGYQGNIHKDNQSRGPMAHGSRYHRR.

Belongs to the universal ribosomal protein uL3 family. As to quaternary structure, part of the 50S ribosomal subunit. Forms a cluster with proteins L14 and L19.

One of the primary rRNA binding proteins, it binds directly near the 3'-end of the 23S rRNA, where it nucleates assembly of the 50S subunit. The chain is Large ribosomal subunit protein uL3 from Limosilactobacillus reuteri (strain DSM 20016) (Lactobacillus reuteri).